The primary structure comprises 151 residues: UPF0098 protein MTH_273 (151 aa).

Belongs to the UPF0098 family.

This is UPF0098 protein MTH_273 from Methanothermobacter thermautotrophicus (strain ATCC 29096 / DSM 1053 / JCM 10044 / NBRC 100330 / Delta H) (Methanobacterium thermoautotrophicum).